Here is a 61-residue protein sequence, read N- to C-terminus: Large ribosomal subunit protein bL32 (61 aa).

Over residues 1–16 (MAVPRRKTSPSRRGMR) the composition is skewed to basic residues. Positions 1–61 (MAVPRRKTSP…RQVLKAKSDS (61 aa)) are disordered. The span at 27 to 44 (YAEDKDSGELRRPHHLDL) shows a compositional bias: basic and acidic residues.

This sequence belongs to the bacterial ribosomal protein bL32 family.

The protein is Large ribosomal subunit protein bL32 of Nitrobacter winogradskyi (strain ATCC 25391 / DSM 10237 / CIP 104748 / NCIMB 11846 / Nb-255).